The primary structure comprises 218 residues: Protein N-lysine methyltransferase METTL21A (218 aa).

Residues tryptophan 47, 73–75 (GAG), aspartate 94, tryptophan 125, and alanine 143 contribute to the S-adenosyl-L-methionine site.

This sequence belongs to the methyltransferase superfamily. METTL21 family. As to quaternary structure, interacts with heat shock 70 family members; at least some of these proteins are methylation substrates.

It localises to the cytoplasm. It carries out the reaction L-lysyl-[protein] + 3 S-adenosyl-L-methionine = N(6),N(6),N(6)-trimethyl-L-lysyl-[protein] + 3 S-adenosyl-L-homocysteine + 3 H(+). Functionally, protein-lysine methyltransferase that selectively trimethylates residues in heat shock protein 70 (HSP70) family members. Contributes to the in vivo trimethylation of Lys residues in HSPA1 and HSPA8. In vitro methylates 'Lys-561' in HSPA1, 'Lys-564' in HSPA2, 'Lys-585' in HSPA5, 'Lys-563' in HSPA6 and 'Lys-561' in HSPA8. The protein is Protein N-lysine methyltransferase METTL21A (Mettl21A) of Mus musculus (Mouse).